The primary structure comprises 287 residues: Rhodopsin (287 aa).

At valine 1–alanine 5 the chain is on the extracellular side. The helical transmembrane segment at tyrosine 6–valine 30 threads the bilayer. Residues threonine 31–asparagine 42 lie on the Cytoplasmic side of the membrane. Residues tyrosine 43–tyrosine 65 traverse the membrane as a helical segment. The Extracellular segment spans residues threonine 66 to cysteine 79. Cysteine 79 and cysteine 156 are disulfide-bonded. The chain crosses the membrane as a helical span at residues asparagine 80–valine 102. Residues glutamate 103–tryptophan 105 carry the 'Ionic lock' involved in activated form stabilization motif. Over glutamate 103–histidine 121 the chain is Cytoplasmic. A helical membrane pass occupies residues alanine 122–valine 142. Topologically, residues glycine 143 to serine 171 are extracellular. N-linked (GlcNAc...) asparagine glycosylation occurs at asparagine 169. The chain crosses the membrane as a helical span at residues leucine 172–glycine 193. Residues arginine 194–arginine 221 are Cytoplasmic-facing. A helical membrane pass occupies residues methionine 222–tyrosine 243. Over isoleucine 244–valine 255 the chain is Extracellular. A helical membrane pass occupies residues phenylalanine 256–cysteine 277. Lysine 265 carries the N6-(retinylidene)lysine modification. Topologically, residues methionine 278–isoleucine 287 are cytoplasmic.

The protein belongs to the G-protein coupled receptor 1 family. Opsin subfamily. In terms of processing, phosphorylated on some or all of the serine and threonine residues present in the C-terminal region. Contains one covalently linked retinal chromophore.

The protein localises to the membrane. It localises to the cell projection. The protein resides in the cilium. Its subcellular location is the photoreceptor outer segment. Functionally, photoreceptor required for image-forming vision at low light intensity. While most salt water fish species use retinal as chromophore, most freshwater fish use 3-dehydroretinal, or a mixture of retinal and 3-dehydroretinal. Light-induced isomerization of 11-cis to all-trans retinal triggers a conformational change that activates signaling via G-proteins. Subsequent receptor phosphorylation mediates displacement of the bound G-protein alpha subunit by arrestin and terminates signaling. This Taurulus bubalis (Long-spined sea scorpion) protein is Rhodopsin (rho).